The following is a 160-amino-acid chain: SsrA-binding protein (160 aa).

This sequence belongs to the SmpB family.

It localises to the cytoplasm. In terms of biological role, required for rescue of stalled ribosomes mediated by trans-translation. Binds to transfer-messenger RNA (tmRNA), required for stable association of tmRNA with ribosomes. tmRNA and SmpB together mimic tRNA shape, replacing the anticodon stem-loop with SmpB. tmRNA is encoded by the ssrA gene; the 2 termini fold to resemble tRNA(Ala) and it encodes a 'tag peptide', a short internal open reading frame. During trans-translation Ala-aminoacylated tmRNA acts like a tRNA, entering the A-site of stalled ribosomes, displacing the stalled mRNA. The ribosome then switches to translate the ORF on the tmRNA; the nascent peptide is terminated with the 'tag peptide' encoded by the tmRNA and targeted for degradation. The ribosome is freed to recommence translation, which seems to be the essential function of trans-translation. This is SsrA-binding protein from Citrobacter koseri (strain ATCC BAA-895 / CDC 4225-83 / SGSC4696).